A 128-amino-acid chain; its full sequence is Large ribosomal subunit protein bL12 (128 aa).

This sequence belongs to the bacterial ribosomal protein bL12 family. As to quaternary structure, homodimer. Part of the ribosomal stalk of the 50S ribosomal subunit. Forms a multimeric L10(L12)X complex, where L10 forms an elongated spine to which 2 to 4 L12 dimers bind in a sequential fashion. Binds GTP-bound translation factors.

Forms part of the ribosomal stalk which helps the ribosome interact with GTP-bound translation factors. Is thus essential for accurate translation. The protein is Large ribosomal subunit protein bL12 of Corynebacterium jeikeium (strain K411).